The chain runs to 152 residues: Arginine repressor (152 aa).

It belongs to the ArgR family.

It is found in the cytoplasm. The protein operates within amino-acid biosynthesis; L-arginine biosynthesis [regulation]. Its function is as follows. Regulates arginine biosynthesis genes. The polypeptide is Arginine repressor (Lactiplantibacillus plantarum (strain ATCC BAA-793 / NCIMB 8826 / WCFS1) (Lactobacillus plantarum)).